We begin with the raw amino-acid sequence, 424 residues long: Light-independent protochlorophyllide reductase subunit N (424 aa).

Residues Cys27, Cys52, and Cys113 each contribute to the [4Fe-4S] cluster site.

The protein belongs to the BchN/ChlN family. As to quaternary structure, protochlorophyllide reductase is composed of three subunits; BchL, BchN and BchB. Forms a heterotetramer of two BchB and two BchN subunits. It depends on [4Fe-4S] cluster as a cofactor.

The enzyme catalyses chlorophyllide a + oxidized 2[4Fe-4S]-[ferredoxin] + 2 ADP + 2 phosphate = protochlorophyllide a + reduced 2[4Fe-4S]-[ferredoxin] + 2 ATP + 2 H2O. The protein operates within porphyrin-containing compound metabolism; bacteriochlorophyll biosynthesis (light-independent). Its function is as follows. Component of the dark-operative protochlorophyllide reductase (DPOR) that uses Mg-ATP and reduced ferredoxin to reduce ring D of protochlorophyllide (Pchlide) to form chlorophyllide a (Chlide). This reaction is light-independent. The NB-protein (BchN-BchB) is the catalytic component of the complex. The chain is Light-independent protochlorophyllide reductase subunit N from Halorhodospira halophila (strain DSM 244 / SL1) (Ectothiorhodospira halophila (strain DSM 244 / SL1)).